The primary structure comprises 98 residues: Plastocyanin (98 aa).

The Plastocyanin-like domain occupies Ala-1–Gln-98. Cu cation contacts are provided by His-38, Cys-83, His-86, and Met-91.

Belongs to the plastocyanin family. Requires Cu(2+) as cofactor.

The protein resides in the plastid. It is found in the chloroplast thylakoid membrane. Participates in electron transfer between P700 and the cytochrome b6-f complex in photosystem I. This chain is Plastocyanin (PETE), found in Ulva prolifera (Green seaweed).